The sequence spans 65 residues: Small ribosomal subunit protein bS21 (65 aa).

Positions Glu39 to Asp65 are disordered. Basic residues predominate over residues Ile43–Asp65.

This sequence belongs to the bacterial ribosomal protein bS21 family.

This is Small ribosomal subunit protein bS21 from Pelobacter propionicus (strain DSM 2379 / NBRC 103807 / OttBd1).